The chain runs to 113 residues: UPF0060 membrane protein Arth_4423 (113 aa).

The next 4 membrane-spanning stretches (helical) occupy residues 7–27, 33–53, 62–82, and 91–111; these read VLLF…VWQA, AWWW…VATL, ILAA…MVFD, and VIGS…PRGT.

Belongs to the UPF0060 family.

It localises to the cell membrane. The protein is UPF0060 membrane protein Arth_4423 of Arthrobacter sp. (strain FB24).